Here is a 94-residue protein sequence, read N- to C-terminus: Large ribosomal subunit protein bL27 (94 aa).

Residues 1 to 9 (MLKLNLQFF) constitute a propeptide that is removed on maturation. The interval 12-32 (KKGVSSTKNGRDSESKRLGAK) is disordered. Over residues 20-32 (NGRDSESKRLGAK) the composition is skewed to basic and acidic residues.

Belongs to the bacterial ribosomal protein bL27 family. In terms of processing, the N-terminus is cleaved by ribosomal processing cysteine protease Prp.

The sequence is that of Large ribosomal subunit protein bL27 from Staphylococcus carnosus (strain TM300).